The primary structure comprises 547 residues: Cellodextrinase (547 aa).

Aspartate 148 acts as the Nucleophile in catalysis. Residues histidine 474, aspartate 520, and glutamate 529 contribute to the active site.

It belongs to the glycosyl hydrolase 9 (cellulase E) family.

Its subcellular location is the secreted. The enzyme catalyses Endohydrolysis of (1-&gt;4)-beta-D-glucosidic linkages in cellulose, lichenin and cereal beta-D-glucans.. Its activity is regulated as follows. Is not inhibited by methylcellulose. Glycoside hydrolase that rapidly hydrolyzes short-chain cellodextrins to yield either cellobiose or cellobiose and glucose as end products; cellobiose is not hydrolyzed further. Also shows limited activity against endoglucanase specific substrates (carboxymethylcellulose (CMC), lichenan, laminarin and xylan). This chain is Cellodextrinase, found in Butyrivibrio fibrisolvens.